The sequence spans 71 residues: Protein DP71L (71 aa).

2 important for host CHOP inhibition regions span residues 16–18 and 57–61; these read VRF and LSTVL.

Belongs to the asfivirus DP71L family. Interacts (via C-terminus) with host PPP1CB.

Interacts with the host phosphatase PP1 catalytic subunit (PPP1CB) and recruits it to dephosphorylate EIF2S1/eIF2alpha and therefore restores the host translation that has been shut-down by the host. Also inhibits the EIF2S1/eIF2alpha-ATF4-DDIT3/CHOP pathway. This is Protein DP71L from African swine fever virus (strain Badajoz 1971 Vero-adapted) (Ba71V).